Consider the following 359-residue polypeptide: S-adenosylmethionine:tRNA ribosyltransferase-isomerase (359 aa).

Belongs to the QueA family. Monomer.

The protein resides in the cytoplasm. The enzyme catalyses 7-aminomethyl-7-carbaguanosine(34) in tRNA + S-adenosyl-L-methionine = epoxyqueuosine(34) in tRNA + adenine + L-methionine + 2 H(+). It functions in the pathway tRNA modification; tRNA-queuosine biosynthesis. Its function is as follows. Transfers and isomerizes the ribose moiety from AdoMet to the 7-aminomethyl group of 7-deazaguanine (preQ1-tRNA) to give epoxyqueuosine (oQ-tRNA). This Alcanivorax borkumensis (strain ATCC 700651 / DSM 11573 / NCIMB 13689 / SK2) protein is S-adenosylmethionine:tRNA ribosyltransferase-isomerase.